Reading from the N-terminus, the 451-residue chain is Chromosomal replication initiator protein DnaA (451 aa).

Residues 1 to 77 (MTENEQIFWN…EVYNAQISVD (77 aa)) are domain I, interacts with DnaA modulators. Residues 77–110 (DYVFEEDLMIEQNQTKINQKPKQQALNSLPTVTS) form a domain II region. The segment at 111 to 329 (DLNPKYSFEN…GALKDISLVA (219 aa)) is domain III, AAA+ region. Positions 155, 157, 158, and 159 each coordinate ATP. Residues 330-451 (NFKQIDTITV…EIETIKNKIK (122 aa)) are domain IV, binds dsDNA.

This sequence belongs to the DnaA family. As to quaternary structure, oligomerizes as a right-handed, spiral filament on DNA at oriC.

The protein localises to the cytoplasm. In terms of biological role, plays an essential role in the initiation and regulation of chromosomal replication. ATP-DnaA binds to the origin of replication (oriC) to initiate formation of the DNA replication initiation complex once per cell cycle. Binds the DnaA box (a 9 base pair repeat at the origin) and separates the double-stranded (ds)DNA. Forms a right-handed helical filament on oriC DNA; dsDNA binds to the exterior of the filament while single-stranded (ss)DNA is stabiized in the filament's interior. The ATP-DnaA-oriC complex binds and stabilizes one strand of the AT-rich DNA unwinding element (DUE), permitting loading of DNA polymerase. After initiation quickly degrades to an ADP-DnaA complex that is not apt for DNA replication. Binds acidic phospholipids. The polypeptide is Chromosomal replication initiator protein DnaA (Streptococcus pyogenes serotype M4 (strain MGAS10750)).